Consider the following 515-residue polypeptide: 2,3-bisphosphoglycerate-independent phosphoglycerate mutase (515 aa).

2 residues coordinate Mn(2+): aspartate 14 and serine 63. The active site involves serine 63. Residues histidine 124, 154-155, arginine 186, arginine 192, 259-262, and lysine 334 contribute to the substrate site; these read RD and RADR. Residues aspartate 401, histidine 405, aspartate 442, histidine 443, and histidine 460 each contribute to the Mn(2+) site.

Belongs to the BPG-independent phosphoglycerate mutase family. Mg(2+) serves as cofactor. The cofactor is Mn(2+).

The catalysed reaction is (2R)-2-phosphoglycerate = (2R)-3-phosphoglycerate. The protein operates within carbohydrate degradation; glycolysis; pyruvate from D-glyceraldehyde 3-phosphate: step 3/5. Activity is not affected by 2,3-bisphosphoglycerate. Its function is as follows. Catalyzes the interconversion of 2-phosphoglycerate and 3-phosphoglycerate. The sequence is that of 2,3-bisphosphoglycerate-independent phosphoglycerate mutase from Onchocerca volvulus.